Consider the following 359-residue polypeptide: Beta-hexosaminidase (359 aa).

Substrate is bound by residues D64, R72, R138, and 168–169 (KH). The active-site Proton donor/acceptor is H181. The active-site Nucleophile is D252.

The protein belongs to the glycosyl hydrolase 3 family. NagZ subfamily.

The protein localises to the cytoplasm. It carries out the reaction Hydrolysis of terminal non-reducing N-acetyl-D-hexosamine residues in N-acetyl-beta-D-hexosaminides.. It functions in the pathway cell wall biogenesis; peptidoglycan recycling. Its function is as follows. Plays a role in peptidoglycan recycling by cleaving the terminal beta-1,4-linked N-acetylglucosamine (GlcNAc) from peptide-linked peptidoglycan fragments, giving rise to free GlcNAc, anhydro-N-acetylmuramic acid and anhydro-N-acetylmuramic acid-linked peptides. The protein is Beta-hexosaminidase of Thiobacillus denitrificans (strain ATCC 25259 / T1).